Consider the following 103-residue polypeptide: Large ribosomal subunit protein bL21 (103 aa).

The protein belongs to the bacterial ribosomal protein bL21 family. As to quaternary structure, part of the 50S ribosomal subunit. Contacts protein L20.

In terms of biological role, this protein binds to 23S rRNA in the presence of protein L20. This is Large ribosomal subunit protein bL21 from Acidovorax ebreus (strain TPSY) (Diaphorobacter sp. (strain TPSY)).